The following is a 242-amino-acid chain: Outer membrane protein class 4 (242 aa).

The signal sequence occupies residues 1–22 (MTKQLKLSALFVALLASGTAVA). 7 consecutive repeat copies span residues 69–70 (AP), 71–72 (EP), 73–74 (EP), 75–76 (EP), 77–78 (EP), 79–80 (AP), and 81–82 (AP). The interval 69-82 (APEPEPEPEPAPAP) is 7 X 2 AA tandem repeats of X-P. An OmpA-like domain is found at 92–229 (YVDETISLSA…RVDVKIRSIV (138 aa)). A disulfide bond links Cys191 and Cys214.

Belongs to the outer membrane OOP (TC 1.B.6) superfamily. The C-terminus exists in a monomer-dimer equilibrium.

Its subcellular location is the cell outer membrane. The polypeptide is Outer membrane protein class 4 (Neisseria meningitidis serogroup B (strain ATCC BAA-335 / MC58)).